The primary structure comprises 288 residues: Release factor glutamine methyltransferase (288 aa).

S-adenosyl-L-methionine contacts are provided by residues 123 to 127 (GTGSG), aspartate 146, and asparagine 190. 190–193 (NPPY) lines the substrate pocket.

This sequence belongs to the protein N5-glutamine methyltransferase family. PrmC subfamily.

The enzyme catalyses L-glutaminyl-[peptide chain release factor] + S-adenosyl-L-methionine = N(5)-methyl-L-glutaminyl-[peptide chain release factor] + S-adenosyl-L-homocysteine + H(+). In terms of biological role, methylates the class 1 translation termination release factors RF1/PrfA and RF2/PrfB on the glutamine residue of the universally conserved GGQ motif. The sequence is that of Release factor glutamine methyltransferase from Bacillus subtilis (strain 168).